The following is a 322-amino-acid chain: ATP-dependent 6-phosphofructokinase (322 aa).

ATP contacts are provided by residues glycine 12, 73–74 (RF), and 103–106 (GDGT). Aspartate 104 provides a ligand contact to Mg(2+). Residue 126–128 (TID) participates in substrate binding. Aspartate 128 serves as the catalytic Proton acceptor. Arginine 155 serves as a coordination point for ADP. Substrate is bound by residues arginine 163 and 170–172 (MGR). ADP is bound by residues 186–188 (GSE), lysine 212, and 214–216 (KPS). Substrate contacts are provided by residues glutamate 223, arginine 245, and 251–254 (HTQR).

This sequence belongs to the phosphofructokinase type A (PFKA) family. ATP-dependent PFK group I subfamily. Prokaryotic clade 'B1' sub-subfamily. In terms of assembly, homotetramer. Mg(2+) serves as cofactor.

It localises to the cytoplasm. The enzyme catalyses beta-D-fructose 6-phosphate + ATP = beta-D-fructose 1,6-bisphosphate + ADP + H(+). Its pathway is carbohydrate degradation; glycolysis; D-glyceraldehyde 3-phosphate and glycerone phosphate from D-glucose: step 3/4. Its activity is regulated as follows. Allosterically activated by ADP and other diphosphonucleosides, and allosterically inhibited by phosphoenolpyruvate. In terms of biological role, catalyzes the phosphorylation of D-fructose 6-phosphate to fructose 1,6-bisphosphate by ATP, the first committing step of glycolysis. The polypeptide is ATP-dependent 6-phosphofructokinase (Mesomycoplasma hyopneumoniae (strain 232) (Mycoplasma hyopneumoniae)).